We begin with the raw amino-acid sequence, 183 residues long: TATA-box-binding protein (183 aa).

2 consecutive repeat copies span residues 8 to 84 (VENI…VDKI) and 99 to 175 (IQNI…KERL).

The protein belongs to the TBP family.

General factor that plays a role in the activation of archaeal genes transcribed by RNA polymerase. Binds specifically to the TATA box promoter element which lies close to the position of transcription initiation. The polypeptide is TATA-box-binding protein (Methanosphaera stadtmanae (strain ATCC 43021 / DSM 3091 / JCM 11832 / MCB-3)).